A 361-amino-acid polypeptide reads, in one-letter code: MKPSIHSLTHQTMQEWVLEQGEKKFRADQIWEWLYRKRVQSFEEMTNLSKDLIAKLNDQFVVNPLKQGIVQESADGTVKYLFELPDGMLIETVLMRQHYGLSVCVTTQVGCNIGCTFCASGLIKKQRDLNNGEIVAQIMLVQKYFAERGQDERVNHIVVMGIGEPFDNYNNVLNFFRTINDDKGMAIGARHITVSTSGLAHKIRNFADEGVQVNLAVSLHAPNNELRSSIMKINRAFPIEKLFAAIEYYIETTNRRVTFEYIMLNEVNDGVEQALELAELLKNIKKLSYVNLIPYTPVSEHDQYSRSPKERVLAFYDTLKKKGVNCVVRQEHGTDIDAAYGQLRSNTMKRDRQKAVAAVNP.

Glu91 serves as the catalytic Proton acceptor. In terms of domain architecture, Radical SAM core spans Gln97–Arg329. Positions 111, 115, and 118 each coordinate [4Fe-4S] cluster. Residues Gly163 to Glu164, Ser195, Ser218 to His220, and Thr296 contribute to the S-adenosyl-L-methionine site.

Belongs to the radical SAM superfamily. RlmN family. Requires [4Fe-4S] cluster as cofactor.

It localises to the cytoplasm. It catalyses the reaction adenosine(2503) in 23S rRNA + 2 reduced [2Fe-2S]-[ferredoxin] + 2 S-adenosyl-L-methionine = 2-methyladenosine(2503) in 23S rRNA + 5'-deoxyadenosine + L-methionine + 2 oxidized [2Fe-2S]-[ferredoxin] + S-adenosyl-L-homocysteine. The catalysed reaction is adenosine(37) in tRNA + 2 reduced [2Fe-2S]-[ferredoxin] + 2 S-adenosyl-L-methionine = 2-methyladenosine(37) in tRNA + 5'-deoxyadenosine + L-methionine + 2 oxidized [2Fe-2S]-[ferredoxin] + S-adenosyl-L-homocysteine. In terms of biological role, specifically methylates position 2 of adenine 2503 in 23S rRNA and position 2 of adenine 37 in tRNAs. The polypeptide is Putative dual-specificity RNA methyltransferase RlmN (Streptococcus pneumoniae (strain CGSP14)).